The chain runs to 598 residues: Arylsulfate sulfotransferase AssT (598 aa).

The signal sequence occupies residues 1–27 (MFHPYRKTLLSGTVALALGLFATGAIA). Positions 279 and 383 each coordinate 4-methylumbelliferone. Residues cysteine 445 and cysteine 451 are joined by a disulfide bond. Position 463 (histidine 463) interacts with 4-methylumbelliferone. Catalysis depends on histidine 463, which acts as the Nucleophile; sulfurylated histidine covalent intermediate.

The protein belongs to the aryl sulfotransferase family. As to quaternary structure, monomer.

It localises to the periplasm. The catalysed reaction is an aryl sulfate + a phenol = an aryl sulfate + a phenol. It carries out the reaction 4-methylumbelliferone sulfate + phenol = phenyl sulfate + 4-methylumbelliferone. The enzyme catalyses 2-naphthyl sulfate + phenol = phenyl sulfate + 2-naphthol. Its function is as follows. Catalyzes the transfer of a sulfate group from a phenyl sulfate ester to other phenolic compounds. Is able to use several substrate donors and acceptors in vitro: using phenol as an acceptor substrate, 4-methylumbelliferyl sulfate is the best donor substrate, followed by beta-naphthyl sulfate, p-nitrophenyl sulfate (PNS), and alpha-naphthyl sulfate; using PNS as a donor substrate, alpha-naphthol is the best acceptor substrate, followed by phenol, resorcinol, p-acetaminophen, tyramine, and tyrosine. Cannot use 3'-phosphoadenosine-5'-phophosulfate (PAPS), the donor substrate of mammalian sulfotransferase. May be a detoxifying enzyme, converting toxic phenolic compounds into non-toxic materials. This Lelliottia amnigena (Enterobacter amnigenus) protein is Arylsulfate sulfotransferase AssT.